A 214-amino-acid chain; its full sequence is Tungstate uptake system ATP-binding protein TupC (214 aa).

Positions 3–214 (ITVSNLKKSY…GRVGEADGFF (212 aa)) constitute an ABC transporter domain. 35–42 (GPNGAGKT) is a binding site for ATP.

Belongs to the ABC transporter superfamily. In terms of assembly, the complex is composed of two ATP-binding proteins (TupC), two transmembrane proteins (TupB) and a solute-binding protein (TupA).

The enzyme catalyses tungstate(in) + ATP + H2O = tungstate(out) + ADP + phosphate + H(+). In terms of biological role, part of an ABC transporter complex involved in tungstate uptake. Probably responsible for energy coupling to the transport system. The chain is Tungstate uptake system ATP-binding protein TupC from Peptoclostridium acidaminophilum (Eubacterium acidaminophilum).